We begin with the raw amino-acid sequence, 348 residues long: D-amino-acid oxidase (348 aa).

FAD contacts are provided by Ala-15, Ile-18, Lys-40, Ser-52, Gly-56, and Asn-58. (R)-lactate contacts are provided by Tyr-232 and Arg-295. Residues Tyr-232 and Arg-295 each coordinate anthranilate. FAD contacts are provided by Arg-295, Ser-323, Gly-326, Tyr-327, and Gln-328.

The protein belongs to the DAMOX/DASOX family. It depends on FAD as a cofactor.

It localises to the peroxisome. The enzyme catalyses a D-alpha-amino acid + O2 + H2O = a 2-oxocarboxylate + H2O2 + NH4(+). The catalysed reaction is D-serine + O2 + H2O = 3-hydroxypyruvate + H2O2 + NH4(+). It carries out the reaction D-alanine + O2 + H2O = pyruvate + H2O2 + NH4(+). It catalyses the reaction D-arginine + O2 + H2O = 5-guanidino-2-oxopentanoate + H2O2 + NH4(+). Functionally, catalyzes the oxidative deamination of D-amino acids with broad substrate specificity. Enables the organism to utilize D-amino acids as a source of nutrients. In Schizosaccharomyces pombe (strain 972 / ATCC 24843) (Fission yeast), this protein is D-amino-acid oxidase.